The following is a 304-amino-acid chain: Dermonecrotic toxin LlSicTox-betaIA1 (304 aa).

The N-terminal stretch at 1-21 (MLLSAVISFIGFAAFLQEANG) is a signal peptide. Positions 22–26 (HVVER) are excised as a propeptide. The active site involves histidine 38. Residues glutamate 58 and aspartate 60 each coordinate Mg(2+). Histidine 74 acts as the Nucleophile in catalysis. Cystine bridges form between cysteine 78–cysteine 84 and cysteine 80–cysteine 223. Aspartate 118 is a binding site for Mg(2+).

Belongs to the arthropod phospholipase D family. Class II subfamily. Class IIb sub-subfamily. Mg(2+) serves as cofactor. Expressed by the venom gland.

The protein resides in the secreted. It catalyses the reaction an N-(acyl)-sphingosylphosphocholine = an N-(acyl)-sphingosyl-1,3-cyclic phosphate + choline. The catalysed reaction is an N-(acyl)-sphingosylphosphoethanolamine = an N-(acyl)-sphingosyl-1,3-cyclic phosphate + ethanolamine. It carries out the reaction a 1-acyl-sn-glycero-3-phosphocholine = a 1-acyl-sn-glycero-2,3-cyclic phosphate + choline. The enzyme catalyses a 1-acyl-sn-glycero-3-phosphoethanolamine = a 1-acyl-sn-glycero-2,3-cyclic phosphate + ethanolamine. Functionally, dermonecrotic toxins cleave the phosphodiester linkage between the phosphate and headgroup of certain phospholipids (sphingolipid and lysolipid substrates), forming an alcohol (often choline) and a cyclic phosphate. This toxin acts on sphingomyelin (SM) with low activity. It may also act on ceramide phosphoethanolamine (CPE), lysophosphatidylcholine (LPC) and lysophosphatidylethanolamine (LPE), but not on lysophosphatidylserine (LPS), and lysophosphatidylglycerol (LPG). It acts by transphosphatidylation, releasing exclusively cyclic phosphate products as second products. Induces hemolysis, dermonecrosis, and edema. Also induces platelet aggregation. The sequence is that of Dermonecrotic toxin LlSicTox-betaIA1 from Loxosceles laeta (South American recluse spider).